The following is a 731-amino-acid chain: Replication restart protein PriA (731 aa).

Residues 1-98 (MSVAHVALPV…HPIGDVLFHA (98 aa)) form a 3'BD region. Residues 115-177 (WYWFATEQGQ…RGKGLAELAC (63 aa)) are WH. The interval 200–375 (TEQATAVGAI…VRQGKYRQLT (176 aa)) is helicase lobe 1. Residues 210–376 (HSAADRFSAW…RQGKYRQLTL (167 aa)) form the Helicase ATP-binding domain. 223–230 (GITGSGKT) provides a ligand contact to ATP. 6 residues coordinate ADP: Gly226, Gly228, Lys229, Thr230, Glu231, and Arg263. The short motif at 319-322 (DEEH) is the DEAH box element. The Aromatic-rich loop (ARL) signature appears at 326-340 (YKQQEGWRYHARDLA). The tract at residues 387-430 (QQHVLDLKGQPLQAGLSPALISRMRQHLQADNQVILFLNRRGFA) is helicase lobe 2, N-terminus. A CRR region spans residues 431-485 (PALLCHDCGWIAECPRCDSYYTLHQAQHHLRCHHCDSQRPIPRQCPSCGSTHLVP). Cys435, Cys438, Cys444, Cys447, Cys462, Cys465, Cys475, and Cys478 together coordinate Zn(2+). Residues 470–637 (PIPRQCPSCG…QLPPWTSHVL (168 aa)) form the Helicase C-terminal domain. Residues 486 to 626 (VGIGTEQLEQ…AEQALAERQT (141 aa)) form a helicase lobe 2, C-terminus region. Lys543 contributes to the ADP binding site. The CTD stretch occupies residues 633 to 731 (TSHVLIRAED…WVLDVDPIEG (99 aa)).

It belongs to the helicase family. PriA subfamily. In terms of assembly, binds SSB. Component of the replication restart primosome. Zn(2+) serves as cofactor.

It catalyses the reaction Couples ATP hydrolysis with the unwinding of duplex DNA by translocating in the 3'-5' direction.. The enzyme catalyses ATP + H2O = ADP + phosphate + H(+). ATPase activity is stimulated by single-stranded binding protein (SSB). Initiates the restart of stalled replication forks, which reloads the replicative helicase on sites other than the origin of replication. Recognizes and binds to abandoned replication forks and remodels them to uncover a helicase loading site. Promotes assembly of the primosome at these replication forks. Functionally, recognizes abandoned replication forks and remodels SSB on ssDNA to uncover a loading site for DnaB. Binds replication fork DNA, has DNA-dependent ATPase activity in the presence of replication fork DNA, restores normal cell growth and SOS induction to E.coli mutant pirA304. The chain is Replication restart protein PriA from Klebsiella pneumoniae subsp. pneumoniae (strain ATCC 700721 / MGH 78578).